Reading from the N-terminus, the 164-residue chain is Translation initiation factor IF-3 (164 aa).

This sequence belongs to the IF-3 family. As to quaternary structure, monomer.

It is found in the cytoplasm. IF-3 binds to the 30S ribosomal subunit and shifts the equilibrium between 70S ribosomes and their 50S and 30S subunits in favor of the free subunits, thus enhancing the availability of 30S subunits on which protein synthesis initiation begins. The protein is Translation initiation factor IF-3 of Bordetella bronchiseptica (strain ATCC BAA-588 / NCTC 13252 / RB50) (Alcaligenes bronchisepticus).